The following is a 201-amino-acid chain: MSDFYADRLFNALERNEVAPGSLLVAAPDLASPEFSRSVILVIEHSHATTFGVNLASRSDLAVANVLPEWTELTAKPQALYIGGPLSQQAVVGLGVTKPGVDIESSTKFNKLANRLVHVDLRVTPDEVRDDLEGMRFFAGYAEWAPGQLNDEIEQGDWYVAPALPSDVLAPGRVDVWGDVMRRQPMPLPLYSTHPSDPSDN.

Belongs to the UPF0301 (AlgH) family.

The sequence is that of UPF0301 protein CE2927 from Corynebacterium efficiens (strain DSM 44549 / YS-314 / AJ 12310 / JCM 11189 / NBRC 100395).